The chain runs to 407 residues: Histidine--tRNA ligase (407 aa).

Belongs to the class-II aminoacyl-tRNA synthetase family. Homodimer.

The protein localises to the cytoplasm. The enzyme catalyses tRNA(His) + L-histidine + ATP = L-histidyl-tRNA(His) + AMP + diphosphate + H(+). This Wolbachia pipientis subsp. Culex pipiens (strain wPip) protein is Histidine--tRNA ligase.